The chain runs to 804 residues: MLPETMPVCPVRGSVIYPTMVMPIDAGRPISIRAIDEALARDRVLLIVSQRDKEVETPRPSDLFEVGTACNILKMRKNPDGSVQVLVQAFARVRVREWLDLGDHLEARGEVLADEPGEPILVKALVREVKDKFQALLKEGKYLAPEVAQFILNLEDPSQLADYVAFHMDFRLEDKQKVLETANVAERLRAVLVLLEAELALIETQRRIQQQVKEEIDRNQREYFLREQMKAIQRELHGEEGEQEVEEFRRKLEALDLPPVVRQEVERELNRFARMHPDSAEASVIRTYLDWIVNLPWNTRTEDNLDLERAKEILERDHYGLEKVKDRVLEYLAVRKLKAERAKRGEIPPDEVNKGPILLFVGPPGVGKTSIAKSIAEALGRKYVRVSLGGVRDESDIRGHRRTYIGAMPGRIIQGLRQAGTKNPVFLLDEVDKLGISYQGDPAAALLEVLDPAQNKEFVDHYLGVPFDLSEVMFICTANFPQNIPAPLYDRMEPIEFTSYTEQEKLEIAKRYLLPRQLKENGLEPEQVVVTEAALTRLITHYTREAGVRQLEREIGALLRKAARRILEEGKKRVRITEKDLEAYLGPPRFLPETEAREPQVGVATGMYYTPVGGDIMFVEVSVMPGKGNLILTGQLGDVMKESARAALSYAKKNALRFGIPLEKFDKSDIHIHVPAGAIPKEGPSAGVALVSALVSALTEVPVRHDIAMTGEITLTGRVLPIGGVKEKVLGARRAGIREVILPKLNEPDLADIPKPLRQNMTFHFVEHLDQVLDLALVGGLKALEERGRRSRSARRKKELVAHA.

Residues 6-199 (MPVCPVRGSV…AVLVLLEAEL (194 aa)) enclose the Lon N-terminal domain. Position 362-369 (362-369 (GPPGVGKT)) interacts with ATP. In terms of domain architecture, Lon proteolytic spans 598–779 (EPQVGVATGM…DQVLDLALVG (182 aa)). Catalysis depends on residues Ser685 and Lys728.

This sequence belongs to the peptidase S16 family. As to quaternary structure, homohexamer. Organized in a ring with a central cavity.

It localises to the cytoplasm. It catalyses the reaction Hydrolysis of proteins in presence of ATP.. Its function is as follows. ATP-dependent serine protease that mediates the selective degradation of mutant and abnormal proteins as well as certain short-lived regulatory proteins. Required for cellular homeostasis and for survival from DNA damage and developmental changes induced by stress. Degrades polypeptides processively to yield small peptide fragments that are 5 to 10 amino acids long. Binds to DNA in a double-stranded, site-specific manner. The sequence is that of Lon protease 2 from Thermus thermophilus (strain ATCC BAA-163 / DSM 7039 / HB27).